A 124-amino-acid polypeptide reads, in one-letter code: Fluoride-specific ion channel FluC (124 aa).

3 helical membrane-spanning segments follow: residues L5–Q27, V70–I90, and W95–L115. Na(+) contacts are provided by G74 and T77.

The protein belongs to the fluoride channel Fluc/FEX (TC 1.A.43) family.

Its subcellular location is the cell inner membrane. The catalysed reaction is fluoride(in) = fluoride(out). Na(+) is not transported, but it plays an essential structural role and its presence is essential for fluoride channel function. In terms of biological role, fluoride-specific ion channel. Important for reducing fluoride concentration in the cell, thus reducing its toxicity. This chain is Fluoride-specific ion channel FluC, found in Shewanella sediminis (strain HAW-EB3).